The following is a 504-amino-acid chain: Argininosuccinate lyase 2 (504 aa).

It belongs to the lyase 1 family. Argininosuccinate lyase subfamily.

The protein localises to the cytoplasm. The catalysed reaction is 2-(N(omega)-L-arginino)succinate = fumarate + L-arginine. It participates in amino-acid biosynthesis; L-arginine biosynthesis; L-arginine from L-ornithine and carbamoyl phosphate: step 3/3. In Agrobacterium fabrum (strain C58 / ATCC 33970) (Agrobacterium tumefaciens (strain C58)), this protein is Argininosuccinate lyase 2.